Here is a 152-residue protein sequence, read N- to C-terminus: MKTPIELKILDSRIGSEFPLPAYATLGSAGMDLRAMIDTTMTIAPGETQLIPTGIAIHVADPGLAAVLLPRSGLGHKHGIVLGNLVGLIDSDYQGPLMVSCWNRSDIPFTLEIGDRLAQLVFVPVVQAQFKLVDEFDSSDRGEGGFGHSGTK.

Substrate-binding positions include 71 to 73, Asn84, 88 to 90, and Met98; these read RSG and LID.

It belongs to the dUTPase family. Mg(2+) serves as cofactor.

The catalysed reaction is dUTP + H2O = dUMP + diphosphate + H(+). It functions in the pathway pyrimidine metabolism; dUMP biosynthesis; dUMP from dCTP (dUTP route): step 2/2. This enzyme is involved in nucleotide metabolism: it produces dUMP, the immediate precursor of thymidine nucleotides and it decreases the intracellular concentration of dUTP so that uracil cannot be incorporated into DNA. This is Deoxyuridine 5'-triphosphate nucleotidohydrolase from Shewanella sp. (strain MR-7).